The primary structure comprises 161 residues: Transcriptional repressor NrdR (161 aa).

Positions 1 to 11 are enriched in basic residues; the sequence is MQCPHCQHHNS. A disordered region spans residues 1-21; that stretch reads MQCPHCQHHNSRVLESRSSEG. Residues 3-34 fold into a zinc finger; the sequence is CPHCQHHNSRVLESRSSEGGQSIRRRRECLEC. Residues 49–139 form the ATP-cone domain; it reads VTVIKQDGER…VYGRFQGIAD (91 aa).

This sequence belongs to the NrdR family. Requires Zn(2+) as cofactor.

Functionally, negatively regulates transcription of bacterial ribonucleotide reductase nrd genes and operons by binding to NrdR-boxes. The polypeptide is Transcriptional repressor NrdR (Synechocystis sp. (strain ATCC 27184 / PCC 6803 / Kazusa)).